The sequence spans 124 residues: Small ribosomal subunit protein uS12 (124 aa).

The tract at residues Lys9–Pro28 is disordered. Asp89 carries the post-translational modification 3-methylthioaspartic acid.

The protein belongs to the universal ribosomal protein uS12 family. In terms of assembly, part of the 30S ribosomal subunit. Contacts proteins S8 and S17. May interact with IF1 in the 30S initiation complex.

Its function is as follows. With S4 and S5 plays an important role in translational accuracy. Interacts with and stabilizes bases of the 16S rRNA that are involved in tRNA selection in the A site and with the mRNA backbone. Located at the interface of the 30S and 50S subunits, it traverses the body of the 30S subunit contacting proteins on the other side and probably holding the rRNA structure together. The combined cluster of proteins S8, S12 and S17 appears to hold together the shoulder and platform of the 30S subunit. The sequence is that of Small ribosomal subunit protein uS12 from Bdellovibrio bacteriovorus (strain ATCC 15356 / DSM 50701 / NCIMB 9529 / HD100).